Here is a 489-residue protein sequence, read N- to C-terminus: Acetyl-coenzyme A carboxylase carboxyl transferase subunit beta, chloroplastic (489 aa).

The CoA carboxyltransferase N-terminal domain maps to 225-489 (LWIQCDNCYG…FFPLNKTEIK (265 aa)). Zn(2+) is bound by residues cysteine 229, cysteine 232, cysteine 245, and cysteine 248. The C4-type zinc-finger motif lies at 229-248 (CDNCYGLMYKKVEMNVCEEC).

This sequence belongs to the AccD/PCCB family. Acetyl-CoA carboxylase is a heterohexamer composed of biotin carboxyl carrier protein, biotin carboxylase and 2 subunits each of ACCase subunit alpha and ACCase plastid-coded subunit beta (accD). Zn(2+) serves as cofactor.

It is found in the plastid. The protein localises to the chloroplast stroma. It catalyses the reaction N(6)-carboxybiotinyl-L-lysyl-[protein] + acetyl-CoA = N(6)-biotinyl-L-lysyl-[protein] + malonyl-CoA. It functions in the pathway lipid metabolism; malonyl-CoA biosynthesis; malonyl-CoA from acetyl-CoA: step 1/1. Its function is as follows. Component of the acetyl coenzyme A carboxylase (ACC) complex. Biotin carboxylase (BC) catalyzes the carboxylation of biotin on its carrier protein (BCCP) and then the CO(2) group is transferred by the transcarboxylase to acetyl-CoA to form malonyl-CoA. This is Acetyl-coenzyme A carboxylase carboxyl transferase subunit beta, chloroplastic from Draba nemorosa (Woodland whitlowgrass).